The chain runs to 231 residues: Ribose-5-phosphate isomerase A (231 aa).

Residues 32–35, 85–88, and 98–101 contribute to the substrate site; these read TGST, DGAD, and KGGG. The active-site Proton acceptor is Glu-107. Lys-125 is a binding site for substrate.

It belongs to the ribose 5-phosphate isomerase family. In terms of assembly, homodimer.

It carries out the reaction aldehydo-D-ribose 5-phosphate = D-ribulose 5-phosphate. The protein operates within carbohydrate degradation; pentose phosphate pathway; D-ribose 5-phosphate from D-ribulose 5-phosphate (non-oxidative stage): step 1/1. Functionally, catalyzes the reversible conversion of ribose-5-phosphate to ribulose 5-phosphate. The sequence is that of Ribose-5-phosphate isomerase A from Paraburkholderia xenovorans (strain LB400).